The primary structure comprises 330 residues: Ketol-acid reductoisomerase (NADP(+)) (330 aa).

In terms of domain architecture, KARI N-terminal Rossmann spans 3–184; that stretch reads LPVYYDKDID…GGGRMGVLET (182 aa). NADP(+) is bound by residues 26 to 29, serine 52, and serine 54; that span reads YGVQ. The active site involves histidine 109. Glycine 135 contacts NADP(+). Residues 185 to 329 form the KARI C-terminal knotted domain; it reads SFKEECESDL…EILRAPFNHK (145 aa). Mg(2+) is bound by residues aspartate 193, glutamate 197, glutamate 229, and glutamate 233. Serine 254 provides a ligand contact to substrate.

The protein belongs to the ketol-acid reductoisomerase family. The cofactor is Mg(2+).

The enzyme catalyses (2R)-2,3-dihydroxy-3-methylbutanoate + NADP(+) = (2S)-2-acetolactate + NADPH + H(+). It catalyses the reaction (2R,3R)-2,3-dihydroxy-3-methylpentanoate + NADP(+) = (S)-2-ethyl-2-hydroxy-3-oxobutanoate + NADPH + H(+). Its pathway is amino-acid biosynthesis; L-isoleucine biosynthesis; L-isoleucine from 2-oxobutanoate: step 2/4. The protein operates within amino-acid biosynthesis; L-valine biosynthesis; L-valine from pyruvate: step 2/4. Functionally, involved in the biosynthesis of branched-chain amino acids (BCAA). Catalyzes an alkyl-migration followed by a ketol-acid reduction of (S)-2-acetolactate (S2AL) to yield (R)-2,3-dihydroxy-isovalerate. In the isomerase reaction, S2AL is rearranged via a Mg-dependent methyl migration to produce 3-hydroxy-3-methyl-2-ketobutyrate (HMKB). In the reductase reaction, this 2-ketoacid undergoes a metal-dependent reduction by NADPH to yield (R)-2,3-dihydroxy-isovalerate. This Helicobacter pylori (strain J99 / ATCC 700824) (Campylobacter pylori J99) protein is Ketol-acid reductoisomerase (NADP(+)).